The primary structure comprises 123 residues: Small ribosomal subunit protein uS12 (123 aa).

3-methylthioaspartic acid is present on Asp89.

This sequence belongs to the universal ribosomal protein uS12 family. Part of the 30S ribosomal subunit. Contacts proteins S8 and S17. May interact with IF1 in the 30S initiation complex.

With S4 and S5 plays an important role in translational accuracy. In terms of biological role, interacts with and stabilizes bases of the 16S rRNA that are involved in tRNA selection in the A site and with the mRNA backbone. Located at the interface of the 30S and 50S subunits, it traverses the body of the 30S subunit contacting proteins on the other side and probably holding the rRNA structure together. The combined cluster of proteins S8, S12 and S17 appears to hold together the shoulder and platform of the 30S subunit. This is Small ribosomal subunit protein uS12 from Rhizobium leguminosarum bv. trifolii (strain WSM2304).